The sequence spans 369 residues: 3-dehydroquinate synthase (369 aa).

Residues D70–K75, G104–D108, T128–T129, K141, K150, and T168–T171 contribute to the NAD(+) site. Zn(2+)-binding residues include E183, H246, and H262.

This sequence belongs to the sugar phosphate cyclases superfamily. Dehydroquinate synthase family. It depends on Co(2+) as a cofactor. Zn(2+) is required as a cofactor. Requires NAD(+) as cofactor.

The protein resides in the cytoplasm. The enzyme catalyses 7-phospho-2-dehydro-3-deoxy-D-arabino-heptonate = 3-dehydroquinate + phosphate. It functions in the pathway metabolic intermediate biosynthesis; chorismate biosynthesis; chorismate from D-erythrose 4-phosphate and phosphoenolpyruvate: step 2/7. Its function is as follows. Catalyzes the conversion of 3-deoxy-D-arabino-heptulosonate 7-phosphate (DAHP) to dehydroquinate (DHQ). This Rhodococcus erythropolis (strain PR4 / NBRC 100887) protein is 3-dehydroquinate synthase.